A 246-amino-acid chain; its full sequence is Glandular kallikrein (246 aa).

Residues 1–7 (APPIQSR) constitute a propeptide that is removed on maturation. The 236-residue stretch at 8–243 (IIGGRECEKN…YLDWINDTIT (236 aa)) folds into the Peptidase S1 domain. Cystine bridges form between C14–C158, C33–C49, C135–C204, C169–C183, and C194–C219. Residue H48 is the Charge relay system of the active site. N-linked (GlcNAc...) asparagine glycosylation occurs at N85. The interval 85 to 104 (NLSLLKXHTKADGKDYSHDL) is kallikrein (autolysis) loop. The active-site Charge relay system is D103. The active-site Charge relay system is S198. A glycan (N-linked (GlcNAc...) asparagine) is linked at N239.

This sequence belongs to the peptidase S1 family. Kallikrein subfamily. As to quaternary structure, monomer.

It carries out the reaction Preferential cleavage of Arg-|-Xaa bonds in small molecule substrates. Highly selective action to release kallidin (lysyl-bradykinin) from kininogen involves hydrolysis of Met-|-Xaa or Leu-|-Xaa.. In terms of biological role, glandular kallikreins cleave Met-Lys and Arg-Ser bonds in kininogen to release Lys-bradykinin. The sequence is that of Glandular kallikrein from Sus scrofa (Pig).